The following is a 185-amino-acid chain: Protein GrpE (185 aa).

The tract at residues Met-1–Gln-37 is disordered. Over residues Glu-28–Gln-37 the composition is skewed to polar residues.

Belongs to the GrpE family. Homodimer.

The protein resides in the cytoplasm. In terms of biological role, participates actively in the response to hyperosmotic and heat shock by preventing the aggregation of stress-denatured proteins, in association with DnaK and GrpE. It is the nucleotide exchange factor for DnaK and may function as a thermosensor. Unfolded proteins bind initially to DnaJ; upon interaction with the DnaJ-bound protein, DnaK hydrolyzes its bound ATP, resulting in the formation of a stable complex. GrpE releases ADP from DnaK; ATP binding to DnaK triggers the release of the substrate protein, thus completing the reaction cycle. Several rounds of ATP-dependent interactions between DnaJ, DnaK and GrpE are required for fully efficient folding. The sequence is that of Protein GrpE from Helicobacter hepaticus (strain ATCC 51449 / 3B1).